The primary structure comprises 298 residues: tRNA pseudouridine synthase B (298 aa).

Asp39 serves as the catalytic Nucleophile.

This sequence belongs to the pseudouridine synthase TruB family. Type 1 subfamily.

It carries out the reaction uridine(55) in tRNA = pseudouridine(55) in tRNA. In terms of biological role, responsible for synthesis of pseudouridine from uracil-55 in the psi GC loop of transfer RNAs. This Lactobacillus delbrueckii subsp. bulgaricus (strain ATCC BAA-365 / Lb-18) protein is tRNA pseudouridine synthase B.